Here is a 549-residue protein sequence, read N- to C-terminus: CDK5RAP3 protein homolog (549 aa).

3 short sequence motifs (shuffled ATG8-binding motif) span residues 274-277, 285-288, and 333-336; these read IDWD and ISWD.

The protein belongs to the CDK5RAP3 family. In terms of assembly, substrate adapter component of the UFM1 ribosome E3 ligase (UREL) complex. Interacts with ATG8 family proteins.

Its function is as follows. Substrate adapter of E3 ligase complexes mediating ufmylation, the covalent attachment of the ubiquitin-like modifier UFM1 to substrate proteins, and which is involved in various processes, such as ribosome recycling and reticulophagy (also called ER-phagy). The protein is CDK5RAP3 protein homolog of Arabidopsis thaliana (Mouse-ear cress).